Consider the following 307-residue polypeptide: Heparan sulfate glucosamine 3-O-sulfotransferase 1 (307 aa).

Residues 1–20 (MAALLLGAVLLVAQPQLVPS) form the signal peptide. An N-linked (GlcNAc...) asparagine glycan is attached at Asn48. 3'-phosphoadenylyl sulfate is bound by residues 64–68 (KGGTR), Arg147, and Ser155. 3 N-linked (GlcNAc...) asparagine glycosylation sites follow: Asn192, Asn242, and Asn249. Tyr255 lines the 3'-phosphoadenylyl sulfate pocket. An intrachain disulfide couples Cys256 to Cys265. 3'-phosphoadenylyl sulfate is bound at residue 270 to 274 (KGRAH).

Belongs to the sulfotransferase 1 family. As to expression, highly expressed in the brain and kidney and weakly expressed in the heart, lung and placenta.

Its subcellular location is the golgi apparatus lumen. It carries out the reaction alpha-D-glucosaminyl-[heparan sulfate](n) + 3'-phosphoadenylyl sulfate = 3-sulfo-alpha-D-glucosaminyl-[heparan sulfate](n) + adenosine 3',5'-bisphosphate + H(+). Sulfotransferase that utilizes 3'-phospho-5'-adenylyl sulfate (PAPS) to catalyze the transfer of a sulfo group to position 3 of glucosamine residues in heparan. Catalyzes the rate limiting step in the biosynthesis of heparan sulfate (HSact). This modification is a crucial step in the biosynthesis of anticoagulant heparan sulfate as it completes the structure of the antithrombin pentasaccharide binding site. The protein is Heparan sulfate glucosamine 3-O-sulfotransferase 1 (HS3ST1) of Homo sapiens (Human).